We begin with the raw amino-acid sequence, 366 residues long: DNA integrity scanning protein DisA (366 aa).

Residues 21-159 (VHTLKGTLQR…EGKAHMLEQP (139 aa)) enclose the DAC domain. Residues Gly-88, Leu-106, and 119–123 (TRHRS) contribute to the ATP site.

This sequence belongs to the DisA family. As to quaternary structure, homooctamer. The cofactor is Mg(2+).

It carries out the reaction 2 ATP = 3',3'-c-di-AMP + 2 diphosphate. Its function is as follows. Participates in a DNA-damage check-point. DisA forms globular foci that rapidly scan along the chromosomes searching for lesions. Also has diadenylate cyclase activity, catalyzing the condensation of 2 ATP molecules into cyclic di-AMP (c-di-AMP). c-di-AMP likely acts as a signaling molecule that may couple DNA integrity with a cellular process. This Corynebacterium glutamicum (strain R) protein is DNA integrity scanning protein DisA.